A 62-amino-acid polypeptide reads, in one-letter code: uncharacterized protein (62 aa).

A coiled-coil region spans residues 26–62 (YELATLYEAMQKENEEQIEQSKNKLERLRKEWIRLNG).

This is an uncharacterized protein from Bacillus subtilis (strain 168).